Reading from the N-terminus, the 418-residue chain is CinA-like protein (418 aa).

The protein belongs to the CinA family.

The sequence is that of CinA-like protein from Cytophaga hutchinsonii (strain ATCC 33406 / DSM 1761 / CIP 103989 / NBRC 15051 / NCIMB 9469 / D465).